The primary structure comprises 177 residues: RNA pyrophosphohydrolase (177 aa).

Positions 6–149 (GYRPNVGIVI…KRDVYRRVMK (144 aa)) constitute a Nudix hydrolase domain. The Nudix box signature appears at 38–59 (GGINPGESAEQAMYRELFEEVG).

This sequence belongs to the Nudix hydrolase family. RppH subfamily. The cofactor is a divalent metal cation.

Functionally, accelerates the degradation of transcripts by removing pyrophosphate from the 5'-end of triphosphorylated RNA, leading to a more labile monophosphorylated state that can stimulate subsequent ribonuclease cleavage. This chain is RNA pyrophosphohydrolase, found in Cronobacter sakazakii (strain ATCC BAA-894) (Enterobacter sakazakii).